We begin with the raw amino-acid sequence, 270 residues long: 4-hydroxy-tetrahydrodipicolinate reductase (270 aa).

Residues 8-13 and E34 contribute to the NAD(+) site; that span reads GAAGRM. R35 contacts NADP(+). Residues 98–100 and 122–125 contribute to the NAD(+) site; these read GST and SPNM. Residue H155 is the Proton donor/acceptor of the active site. H156 serves as a coordination point for (S)-2,3,4,5-tetrahydrodipicolinate. The active-site Proton donor is the K159. (S)-2,3,4,5-tetrahydrodipicolinate is bound at residue 165-166; the sequence is GT.

Belongs to the DapB family.

It is found in the cytoplasm. It catalyses the reaction (S)-2,3,4,5-tetrahydrodipicolinate + NAD(+) + H2O = (2S,4S)-4-hydroxy-2,3,4,5-tetrahydrodipicolinate + NADH + H(+). The enzyme catalyses (S)-2,3,4,5-tetrahydrodipicolinate + NADP(+) + H2O = (2S,4S)-4-hydroxy-2,3,4,5-tetrahydrodipicolinate + NADPH + H(+). The protein operates within amino-acid biosynthesis; L-lysine biosynthesis via DAP pathway; (S)-tetrahydrodipicolinate from L-aspartate: step 4/4. Catalyzes the conversion of 4-hydroxy-tetrahydrodipicolinate (HTPA) to tetrahydrodipicolinate. In Anaeromyxobacter dehalogenans (strain 2CP-1 / ATCC BAA-258), this protein is 4-hydroxy-tetrahydrodipicolinate reductase.